A 292-amino-acid chain; its full sequence is Glycine--tRNA ligase alpha subunit (292 aa).

The protein belongs to the class-II aminoacyl-tRNA synthetase family. In terms of assembly, tetramer of two alpha and two beta subunits.

It localises to the cytoplasm. The catalysed reaction is tRNA(Gly) + glycine + ATP = glycyl-tRNA(Gly) + AMP + diphosphate. The chain is Glycine--tRNA ligase alpha subunit from Desulfovibrio desulfuricans (strain ATCC 27774 / DSM 6949 / MB).